The primary structure comprises 412 residues: 8-amino-7-oxononanoate synthase (412 aa).

106–107 provides a ligand contact to pyridoxal 5'-phosphate; sequence GY. His-131 is a substrate binding site. Pyridoxal 5'-phosphate-binding residues include Ser-187, His-219, and Thr-247. Position 250 is an N6-(pyridoxal phosphate)lysine (Lys-250). Thr-370 is a substrate binding site.

It belongs to the class-II pyridoxal-phosphate-dependent aminotransferase family. BioF subfamily. As to quaternary structure, homodimer. The cofactor is pyridoxal 5'-phosphate.

It catalyses the reaction 6-carboxyhexanoyl-[ACP] + L-alanine + H(+) = (8S)-8-amino-7-oxononanoate + holo-[ACP] + CO2. The protein operates within cofactor biosynthesis; biotin biosynthesis. 8-amino-7-oxononanoate synthase; part of the cluster involved in the biosynthesis of biotin (also known as vitamin B8 or vitamin H), a water-soluble vitamin that functions as a prosthetic group of many carboxylases, such as acetyl-CoA carboxylase and pyruvate carboxylase. Catalyzes the decarboxylative condensation of pimeloyl-[acyl-carrier protein] and L-alanine to produce 8-amino-7-oxononanoate (AON). The protein is 8-amino-7-oxononanoate synthase of Emericella nidulans (strain FGSC A4 / ATCC 38163 / CBS 112.46 / NRRL 194 / M139) (Aspergillus nidulans).